The following is an 87-amino-acid chain: U3-theraphotoxin-Hhn1e (87 aa).

An N-terminal signal peptide occupies residues 1-24 (MVNMKASMFLTFAGLVLLFVVCYA). Positions 25–52 (SESEEKEFPKGMLSSIFAVDNDFKQEER) are excised as a propeptide. 3 cysteine pairs are disulfide-bonded: cysteine 54/cysteine 67, cysteine 61/cysteine 72, and cysteine 66/cysteine 79.

This sequence belongs to the neurotoxin 10 (Hwtx-1) family. 51 (Hntx-8) subfamily. Hntx-8 sub-subfamily. Expressed by the venom gland.

Its subcellular location is the secreted. Ion channel inhibitor. The sequence is that of U3-theraphotoxin-Hhn1e from Cyriopagopus hainanus (Chinese bird spider).